The primary structure comprises 61 residues: Probable tautomerase BA_5626/GBAA_5626/BAS5226 (61 aa).

The active-site Proton acceptor; via imino nitrogen is P2.

This sequence belongs to the 4-oxalocrotonate tautomerase family.

This chain is Probable tautomerase BA_5626/GBAA_5626/BAS5226, found in Bacillus anthracis.